We begin with the raw amino-acid sequence, 221 residues long: Probable transaldolase (221 aa).

Lys83 functions as the Schiff-base intermediate with substrate in the catalytic mechanism.

Belongs to the transaldolase family. Type 3B subfamily.

Its subcellular location is the cytoplasm. It carries out the reaction D-sedoheptulose 7-phosphate + D-glyceraldehyde 3-phosphate = D-erythrose 4-phosphate + beta-D-fructose 6-phosphate. It participates in carbohydrate degradation; pentose phosphate pathway; D-glyceraldehyde 3-phosphate and beta-D-fructose 6-phosphate from D-ribose 5-phosphate and D-xylulose 5-phosphate (non-oxidative stage): step 2/3. Functionally, transaldolase is important for the balance of metabolites in the pentose-phosphate pathway. In Petrotoga mobilis (strain DSM 10674 / SJ95), this protein is Probable transaldolase.